The following is a 274-amino-acid chain: MSQIKPSRLSSSAEIRGARQLDVLQRHKLAEPQQDWLAEEVPVALVYNGISHVVMMATPKDLAAFALGFSLSEGIISSPQEIYSIEMTPGCNGIEVNIELSSRRFAGLKERRRAMAGRTGCGVCGIEQLDDIFRPITPLPFTQAFNLEHLDTALAQLKQVQPVGQLTGCTHAAAWINPEGELLGGCEDVGRHVALDKLLGIRAKQPWQQGAVLVSSRASYEMVQKTAMCGAEILFAVSAATTLAVEVAERCNLTLVGFSKPGRATVYTHPQRIK.

The Cysteine persulfide intermediate role is filled by Cys121. 258–263 (FSKPGR) is a Mo-bis(molybdopterin guanine dinucleotide) binding site.

Belongs to the FdhD family.

The protein localises to the cytoplasm. In terms of biological role, required for formate dehydrogenase (FDH) activity. Acts as a sulfur carrier protein that transfers sulfur from IscS to the molybdenum cofactor prior to its insertion into FDH. In Yersinia pestis bv. Antiqua (strain Antiqua), this protein is Sulfur carrier protein FdhD.